A 205-amino-acid polypeptide reads, in one-letter code: Mediator of RNA polymerase II transcription subunit 29 (205 aa).

A compositionally biased stretch (low complexity) spans Met1–Gln27. The tract at residues Met1–Leu65 is disordered. Positions Pro28–Val38 are enriched in pro residues. Positions Pro39–Gln61 are enriched in low complexity.

Belongs to the Mediator complex subunit 29 family. As to quaternary structure, component of the Mediator complex.

It localises to the nucleus. Its function is as follows. Component of the Mediator complex, a coactivator involved in the regulated transcription of nearly all RNA polymerase II-dependent genes. Mediator functions as a bridge to convey information from gene-specific regulatory proteins to the basal RNA polymerase II transcription machinery. Mediator is recruited to promoters by direct interactions with regulatory proteins and serves as a scaffold for the assembly of a functional preinitiation complex with RNA polymerase II and the general transcription factors. The polypeptide is Mediator of RNA polymerase II transcription subunit 29 (ix) (Drosophila virilis (Fruit fly)).